The sequence spans 133 residues: UPF0102 protein Anae109_1947 (133 aa).

This sequence belongs to the UPF0102 family.

This chain is UPF0102 protein Anae109_1947, found in Anaeromyxobacter sp. (strain Fw109-5).